A 142-amino-acid chain; its full sequence is Hemoglobin subunit alpha (142 aa).

Positions 2–142 constitute a Globin domain; sequence VLSAADKTNV…VSTVLTSKYR (141 aa). The residue at position 4 (Ser4) is a Phosphoserine. Lys8 bears the N6-succinyllysine mark. Phosphothreonine is present on Thr9. Lys12 carries the post-translational modification N6-succinyllysine. Lys17 carries the post-translational modification N6-acetyllysine; alternate. Lys17 carries the post-translational modification N6-succinyllysine; alternate. Residue Tyr25 is modified to Phosphotyrosine. Lys41 is modified (N6-succinyllysine). Position 50 is a phosphoserine (Ser50). O2 is bound at residue His59. His88 contributes to the heme b binding site. Position 103 is a phosphoserine (Ser103). A Phosphothreonine modification is found at Thr109. Phosphoserine is present on residues Ser125 and Ser132. A phosphothreonine mark is found at Thr135 and Thr138. Ser139 carries the post-translational modification Phosphoserine.

This sequence belongs to the globin family. In terms of assembly, heterotetramer of two alpha chains and two beta chains. Red blood cells.

In terms of biological role, involved in oxygen transport from the lung to the various peripheral tissues. Hemopressin acts as an antagonist peptide of the cannabinoid receptor CNR1. Hemopressin-binding efficiently blocks cannabinoid receptor CNR1 and subsequent signaling. The sequence is that of Hemoglobin subunit alpha (HBA) from Equus caballus (Horse).